The sequence spans 35 residues: Malate dehydrogenase, mitochondrial (35 aa).

Residue asparagine 7 coordinates NAD(+). Arginine 23 lines the substrate pocket.

Belongs to the LDH/MDH superfamily. MDH type 1 family. Homodimer.

Its subcellular location is the mitochondrion matrix. The catalysed reaction is (S)-malate + NAD(+) = oxaloacetate + NADH + H(+). The sequence is that of Malate dehydrogenase, mitochondrial from Capsicum annuum var. annuum (Red pepper).